Consider the following 391-residue polypeptide: MDHSISPEYNFPAITRCSLSNSLPHRPPSPLPSSADIHRFYNSLSPSAPSVPVSSEMESMEAVEKILNYKFSNKSLLKEAITHTSCTDFPSYERLEFIGDSAIGLAISNYLYLTYPSLEPHDLSLLRAANVSTEKLARVSLNHGLYSFLRRNAPSLDEKVKEFSEAVGKEDDLSVSYGGLVKAPKVLADLFESLAGAVYVDVNFDLQRLWVIFRGLLEPIVTLDDLQKQPQPVSMLFKLCHKHKKRIDIKNWKDGNVSIAVIYLDDELLASGRAENKDIARLIAAKEALRKLSEVFPVEMVIDEDSVEIQLTHAKTKLNEICLKKKWPKPIYSVEEDRSSVQGKRFVCSAKIKITEEKTLYMKGDEQSKIKKAESSSAYHMIRALRKSHYL.

A Nuclear export signal motif is present at residues proline 7–arginine 26. The RNase III domain maps to methionine 60–asparagine 203. 3 residues coordinate Mg(2+): glutamate 96, aspartate 189, and glutamate 192. DRBM domains are found at residues glutamate 218–glutamate 294 and histidine 313–lysine 387. Cysteine 240 and cysteine 322 are joined by a disulfide. A Bipartite nuclear localization motif is present at residues lysine 371–lysine 387.

As to quaternary structure, homodimer; disulfide-linked. The cofactor is Mg(2+). It depends on Mn(2+) as a cofactor. In terms of tissue distribution, expressed in seeds, leaves and flower buds.

It is found in the nucleus. The protein localises to the cytoplasm. In terms of biological role, ribonuclease that cleaves double-stranded RNA (dsRNA). Required for 3'-external transcribed spacer (ETS) cleavage of the pre-rRNA precursors. May promote the production of 21 nucleotide small interfering RNA (siRNA) during post-transcriptional gene silencing (PTGS). The chain is Ribonuclease 3-like protein 2 (RTL2) from Arabidopsis thaliana (Mouse-ear cress).